We begin with the raw amino-acid sequence, 858 residues long: MPNFDAHTPMMKQYLTIKAENPDILLFYRMGDFYEMFYDDAKKAAALLDISLTKRGQSAGRPIPMAGVPYHAVEGYLAKLVQLGESVAICEQIGDPAASKGPVERKIVRIVTPGTVSDENLLPERQDNLLVAVYQEKDRFGLASLDMSSGRFQIAEAENAETLHAELQRLQPAELLYSEDFSEMAIIEQTKGLRRRPIWEFELGTAVQLLNRQFGTKDLKAFGVEKAVLGLCAAGCLFQYAKETQRTALPHIKSISLVQNSDTVQLDAATRRNLELTRNLSGGTENTLASVLDKCVTPMGSRLLKRWIHQPIRKIQKLRQRQQTIAAILQDDLIDELQPLLRQVGDMERILARVALRTARPRDLTRLRTALEQLPQLQQIIKTLQNLTALSQPMGEFAELCDLLQRAIIDSPPLLIRDGGVIAPGYHAELDEWRSLADGATQYLADLERRERESTGIDTLKIGYNAVHGYYIQISQGQAHNAPMHYVRRQTLKNAERYIIPELKTYEDKVLKAKGAALALEKQLYEEIFDQLLPHLAALQLSSMTLAELDVLTNLAERAETLNYVCPEFSPEIGVEIQNGRHPVVEQVLKEPFIANPVCLNPQRRLLVITGPNMGGKSTYMRQTALITLMAYMGGFVPAERAVIGPIDRIFTRIGASDDLASGRSTFMVEMTEMANILHQATADSLVLIDEIGRGTSTYDGLSLAWACAEWLAKKLRSLTLFATHYFELTVLPEQFAGTANVHLDALEHDNTIAFMHAVQDGAASKSYGLAVAALAGVPQQVIKLAKQKLAQLEKLSAQSADQKLQDLRTLHQMQGELALMEEDDGKNAALEMLEKLDPDELSPKQALAYLYQLKTLL.

611–618 (GPNMGGKS) is an ATP binding site.

It belongs to the DNA mismatch repair MutS family.

In terms of biological role, this protein is involved in the repair of mismatches in DNA. It is possible that it carries out the mismatch recognition step. This protein has a weak ATPase activity. The protein is DNA mismatch repair protein MutS of Actinobacillus succinogenes (strain ATCC 55618 / DSM 22257 / CCUG 43843 / 130Z).